Reading from the N-terminus, the 1111-residue chain is Histone deacetylase 5 (1111 aa).

A Glycyl lysine isopeptide (Lys-Gly) (interchain with G-Cter in SUMO2) cross-link involves residue K35. Disordered regions lie at residues 40–63 (GAMPSSMGGGGGGSPSPVELRGAL), 107–136 (RQHEVQLQKHLKQQQEMLAAKRQQELEQQR), and 187–272 (KEPT…SSPL). Over residues 238–249 (DSRDDFPLRKTA) the composition is skewed to basic and acidic residues. The residue at position 250 (S250) is a Phosphoserine; by AMPK, CaMK1, SIK1 and PKD/PRKD1. Basic and acidic residues predominate over residues 263–272 (KVAERRSSPL). T283 is subject to Phosphothreonine; by PKC. The disordered stretch occupies residues 474–495 (TVGKLPRHRPLSRTQSSPLPQS). Low complexity predominate over residues 485–495 (SRTQSSPLPQS). Residue S489 is modified to Phosphoserine; by AMPK, CaMK1, SIK1 and PKD/PRKD1. The residue at position 524 (K524) is an N6-acetyllysine. 2 disordered regions span residues 527 to 611 (TKTG…LEES) and 645 to 666 (LGRTQSSPAAPGSMKSPPDQPT). Acidic residues predominate over residues 572 to 610 (STQEDLEEEEDEEEEDEDCIQVKDEEGESGPDEGPDLEE). A phosphoserine mark is found at S600 and S650. Positions 671-1017 (TTGVVYDTFM…VSALLSVELQ (347 aa)) are histone deacetylase. Zn(2+) contacts are provided by C685, C687, H693, and C770. Residue H822 is part of the active site. A Nuclear export signal motif is present at residues 1070–1109 (EEAETVSAMALLSVGAEQAQAVATQEHSPRPAEEPMEQEP). The segment at 1086 to 1111 (EQAQAVATQEHSPRPAEEPMEQEPTL) is disordered. S1097 carries the phosphoserine modification.

This sequence belongs to the histone deacetylase family. HD type 2 subfamily. In terms of assembly, interacts with AHRR, BAHD1, BCOR, HDAC7, HDAC9, CTBP1, MEF2C, NCOR2, NRIP1, PHB2 and a 14-3-3 chaperone protein. Interacts with BCL6, DDIT3/CHOP, GRK5, KDM5B and MYOCD. Interacts with EP300 in the presence of TFAP2C. Interacts with ANKRA2. Interacts with CUL7 (as part of the 3M complex); negatively regulated by ANKRA2. Interacts with ZBTB7B; the interaction allows the recruitment of HDAC4 on CD8 loci for deacetylation and possible inhibition of CD8 genes expression. Interacts with RARA. In terms of processing, phosphorylated by AMPK, CaMK1, SIK1 and PRKD1 at Ser-250 and Ser-489. The phosphorylation is required for the export to the cytoplasm and inhibition. Phosphorylated by the PKC kinases PKN1 and PKN2, impairing nuclear import. Phosphorylated by GRK5, leading to nuclear export of HDAC5 and allowing MEF2-mediated transcription. Post-translationally, ubiquitinated. Polyubiquitination however does not lead to its degradation.

The protein resides in the nucleus. It localises to the cytoplasm. It carries out the reaction N(6)-acetyl-L-lysyl-[histone] + H2O = L-lysyl-[histone] + acetate. Responsible for the deacetylation of lysine residues on the N-terminal part of the core histones (H2A, H2B, H3 and H4). Histone deacetylation gives a tag for epigenetic repression and plays an important role in transcriptional regulation, cell cycle progression and developmental events. Histone deacetylases act via the formation of large multiprotein complexes. Involved in muscle maturation by repressing transcription of myocyte enhancer MEF2C. During muscle differentiation, it shuttles into the cytoplasm, allowing the expression of myocyte enhancer factors. Serves as a corepressor of RARA and causes its deacetylation. In association with RARA, plays a role in the repression of microRNA-10a and thereby in the inflammatory response. The chain is Histone deacetylase 5 (HDAC5) from Cricetulus griseus (Chinese hamster).